Consider the following 325-residue polypeptide: Ribosomal RNA small subunit methyltransferase H (325 aa).

Residues 39–41 (GGH), Asp59, Phe90, Asp108, and Gln115 contribute to the S-adenosyl-L-methionine site.

It belongs to the methyltransferase superfamily. RsmH family.

Its subcellular location is the cytoplasm. The enzyme catalyses cytidine(1402) in 16S rRNA + S-adenosyl-L-methionine = N(4)-methylcytidine(1402) in 16S rRNA + S-adenosyl-L-homocysteine + H(+). In terms of biological role, specifically methylates the N4 position of cytidine in position 1402 (C1402) of 16S rRNA. This chain is Ribosomal RNA small subunit methyltransferase H, found in Leptothrix cholodnii (strain ATCC 51168 / LMG 8142 / SP-6) (Leptothrix discophora (strain SP-6)).